The following is a 243-amino-acid chain: Probable transcriptional regulatory protein LGAS_1276 (243 aa).

The segment at 1 to 22 is disordered; it reads MSGHSKWHNIQGRKNAQDAKRG.

This sequence belongs to the TACO1 family.

Its subcellular location is the cytoplasm. This chain is Probable transcriptional regulatory protein LGAS_1276, found in Lactobacillus gasseri (strain ATCC 33323 / DSM 20243 / BCRC 14619 / CIP 102991 / JCM 1131 / KCTC 3163 / NCIMB 11718 / NCTC 13722 / AM63).